The chain runs to 460 residues: uncharacterized protein (460 aa).

The TRAM domain maps to Pro6–Asn64. [4Fe-4S] cluster-binding residues include Cys77, Cys83, Cys86, and Cys163. Residues Gln287, Tyr316, Glu337, and Asp385 each contribute to the S-adenosyl-L-methionine site. Cys412 acts as the Nucleophile in catalysis.

The protein belongs to the class I-like SAM-binding methyltransferase superfamily. RNA M5U methyltransferase family.

This is an uncharacterized protein from Clostridium tetani (strain Massachusetts / E88).